The chain runs to 1321 residues: Probable serine/threonine-protein kinase fnkE (1321 aa).

FNIP repeat units lie at residues 108–149 (YNQL…NLSS), 150–191 (YNQP…DLSS), 192–233 (YNKL…DLSS), and 255–296 (YNKL…DISS). A Protein kinase 1 domain is found at 295–595 (SSYNQLLTPG…YNYVIKDSIM (301 aa)). ATP-binding positions include 301–309 (LTPGTLSNN) and K325. D465 functions as the Proton acceptor in the catalytic mechanism. FNIP repeat units lie at residues 654-696 (FNHP…FNKF) and 741-783 (FNQP…LGSN). In terms of domain architecture, Protein kinase 2 spans 860 to 1128 (WEIISTLGSG…EGDSVFEKYL (269 aa)). ATP is bound by residues 866-874 (LGSGNFGKV) and K895. Catalysis depends on D990, which acts as the Proton acceptor. FNIP repeat units follow at residues 1160–1202 (YNQM…LGNE) and 1224–1268 (FNFT…LGSN).

It belongs to the protein kinase superfamily. STE Ser/Thr protein kinase family. Mg(2+) is required as a cofactor.

The enzyme catalyses L-seryl-[protein] + ATP = O-phospho-L-seryl-[protein] + ADP + H(+). The catalysed reaction is L-threonyl-[protein] + ATP = O-phospho-L-threonyl-[protein] + ADP + H(+). In Dictyostelium discoideum (Social amoeba), this protein is Probable serine/threonine-protein kinase fnkE.